The following is a 252-amino-acid chain: MTLTLLPAVDVADGRAVRLVQGEAGSETSYGDPREAALTWQRDGAEWIHLVDLDAAFGRGSNRELIAEVVRAVDVAVELSGGIRDDASLDAALATGAARVNIGTAALEDPDWVRRAIDRVGDRIAVGLDVRGTTLSARGWTRDGGELFDVLARLDADGCARYVVTDVRRDGTLTGPNVELLRSVTAATSRPVVASGGVATLDDLTAIAVVPGVEGAIIGKALYAGAFTLPEALAVAGNIGNIGNGCAGAVGR.

D10 functions as the Proton acceptor in the catalytic mechanism. The active-site Proton donor is D129.

Belongs to the HisA/HisF family.

The protein resides in the cytoplasm. It carries out the reaction 1-(5-phospho-beta-D-ribosyl)-5-[(5-phospho-beta-D-ribosylamino)methylideneamino]imidazole-4-carboxamide = 5-[(5-phospho-1-deoxy-D-ribulos-1-ylimino)methylamino]-1-(5-phospho-beta-D-ribosyl)imidazole-4-carboxamide. Its pathway is amino-acid biosynthesis; L-histidine biosynthesis; L-histidine from 5-phospho-alpha-D-ribose 1-diphosphate: step 4/9. This chain is 1-(5-phosphoribosyl)-5-[(5-phosphoribosylamino)methylideneamino] imidazole-4-carboxamide isomerase, found in Frankia casuarinae (strain DSM 45818 / CECT 9043 / HFP020203 / CcI3).